The chain runs to 436 residues: Ribosome biogenesis protein WDR12 homolog (436 aa).

Residues 13–97 form a ubiquitin-like (UBL) domain region; the sequence is VRVRFLTKLP…ERVLELEYVK (85 aa). WD repeat units lie at residues 109–147, 149–193, 203–242, 273–311, 313–353, 359–399, and 402–436; these read PHDDWVSAVDGSNPSFVLTGCYDGLARIWRDASECTHIL, GHSD…SVPK, GHTSSVQSVAVDPSTNMICSGSWDNSIKLWSVEGSEEDGD, GHTQCVSAVTWPERQTIYSASWDHSVRQWDVQTGKETWN, VSGK…TLAP, SHKS…PLAS, and SHKDKVLCADWWKGDSVISGGADSKLCIASGIEIV. The segment at 240–262 is disordered; sequence DGDTVSVKKRRTNSDSSGPEESL.

It belongs to the WD repeat WDR12/YTM1 family.

It is found in the nucleus. The protein resides in the nucleolus. The protein localises to the nucleoplasm. Its function is as follows. Required for maturation of ribosomal RNAs and formation of the large ribosomal subunit. This Oryza sativa subsp. japonica (Rice) protein is Ribosome biogenesis protein WDR12 homolog.